The following is a 293-amino-acid chain: Acetylglutamate kinase (293 aa).

Substrate is bound by residues 68–69 (GG), R90, and N189.

The protein belongs to the acetylglutamate kinase family. ArgB subfamily.

The protein resides in the cytoplasm. The enzyme catalyses N-acetyl-L-glutamate + ATP = N-acetyl-L-glutamyl 5-phosphate + ADP. It functions in the pathway amino-acid biosynthesis; L-arginine biosynthesis; N(2)-acetyl-L-ornithine from L-glutamate: step 2/4. In terms of biological role, catalyzes the ATP-dependent phosphorylation of N-acetyl-L-glutamate. The sequence is that of Acetylglutamate kinase from Mycobacterium marinum (strain ATCC BAA-535 / M).